The primary structure comprises 811 residues: Glycerol-3-phosphate acyltransferase (811 aa).

The short motif at 303 to 308 is the HXXXXD motif element; it reads CHRSHM.

Belongs to the GPAT/DAPAT family.

The protein resides in the cell inner membrane. The catalysed reaction is sn-glycerol 3-phosphate + an acyl-CoA = a 1-acyl-sn-glycero-3-phosphate + CoA. The protein operates within phospholipid metabolism; CDP-diacylglycerol biosynthesis; CDP-diacylglycerol from sn-glycerol 3-phosphate: step 1/3. This is Glycerol-3-phosphate acyltransferase from Glaesserella parasuis serovar 5 (strain SH0165) (Haemophilus parasuis).